The chain runs to 598 residues: MPEIRRRPHGPILEKPALKNPTATLRRLLGYLRPHTFTLIMVFVFVTVSSILGVLSPYLIGKTIDVVFVPRRFDLLPRYMLILGTIYALTSLLFWLQGKIMLTLSQDVVFRLRKELFEKLQRVPVGFFDRTPHGDIISRVINDVDNINNVLGNSIIQFFSGIVTLAGAVIMMFRVNVILSLVTLSIVPLTVLITQIVSSQTRKYFYENQRVLGQLNGIIEEDISGLTVIKLFTREEKEMEKFDRVNESLRKVGTKAQIFSGVLPPLMNMVNNLGFALISGFGGWLALKDIITVGTIATFIGYSRQFTRPLNELSNQFNMIQMALASAERIFEILDLEEEKDDPDAVELREVRGEIEFKNVWFSYDKKKPVLKDITFHIKPGQKVALVGPTGSGKTTIVNLLMRFYDVDRGQILVDGIDIRKIKRSSLRSSIGIVLQDTILFSTTVKENLKYGNPGATDEEIKEAAKLTHSDHFIKHLPEGYETVLTDNGEDLSQGQRQLLAITRAFLANPKILILDEATSNVDTKTEKSIQAAMWKLMEGKTSIIIAHRLNTIKNADLIIVLRDGEIVEMGKHDELIQKRGFYYELFTSQYGLVVEKE.

In terms of domain architecture, ABC transmembrane type-1 spans 39-322 (LIMVFVFVTV…LSNQFNMIQM (284 aa)). Transmembrane regions (helical) follow at residues 40-60 (IMVFVFVTVSSILGVLSPYLI), 80-100 (MLILGTIYALTSLLFWLQGKI), 150-170 (VLGNSIIQFFSGIVTLAGAVI), 177-197 (VILSLVTLSIVPLTVLITQIV), and 273-293 (LGFALISGFGGWLALKDIITV). The ABC transporter domain maps to 355–589 (IEFKNVWFSY…RGFYYELFTS (235 aa)). An ATP-binding site is contributed by 388–395 (GPTGSGKT).

Belongs to the ABC transporter superfamily.

The protein resides in the cell membrane. This is an uncharacterized protein from Thermotoga maritima (strain ATCC 43589 / DSM 3109 / JCM 10099 / NBRC 100826 / MSB8).